Here is a 154-residue protein sequence, read N- to C-terminus: Ribonuclease 8 (154 aa).

An N-terminal signal peptide occupies residues 1–27 (MAPARAGCCALLLLLLGLWVAEIPVSA). The active-site Proton acceptor is His-42. 3 disulfide bridges follow: Cys-64-Cys-118, Cys-82-Cys-133, and Cys-89-Cys-96. Substrate-binding positions include 65–69 (KDLNT) and Lys-90. The active-site Proton donor is the His-149.

It belongs to the pancreatic ribonuclease family.

The protein resides in the secreted. Its function is as follows. Has a low ribonuclease activity. The protein is Ribonuclease 8 (RNASE8) of Pongo pygmaeus (Bornean orangutan).